A 132-amino-acid polypeptide reads, in one-letter code: Interleukin-13 (132 aa).

The N-terminal stretch at 1–18 (MALLLTMVIALTCLGGFA) is a signal peptide. Residues asparagine 38, asparagine 49, asparagine 57, and asparagine 72 are each glycosylated (N-linked (GlcNAc...) asparagine). Cystine bridges form between cysteine 48-cysteine 76 and cysteine 64-cysteine 90.

It belongs to the IL-4/IL-13 family. As to quaternary structure, interacts with IL13RA2.

It localises to the secreted. Its function is as follows. Cytokine that plays important roles in allergic inflammation and immune response to parasite infection. Synergizes with IL2 in regulating interferon-gamma synthesis. Stimulates B-cell proliferation, and activation of eosinophils, basophils, and mast cells. Plays an important role in controlling IL33 activity by modulating the production of transmembrane and soluble forms of interleukin-1 receptor-like 1/IL1RL1. Displays the capacity to antagonize Th1-driven proinflammatory immune response and downregulates synthesis of many proinflammatory cytokines including IL1, IL6, IL10, IL12 and TNF-alpha through a mechanism that partially involves suppression of NF-kappa-B. Also functions on nonhematopoietic cells, including endothelial cells where it induces vascular cell adhesion protein 1/VCAM1, which is important in the recruitment of eosinophils. Exerts its biological effects through its receptors which comprises the IL4R chain and the IL13RA1 chain, to activate JAK1 and TYK2, leading to the activation of STAT6. Aside from IL13RA1, another receptor IL13RA2 acts as a high affinity decoy for IL13 and mediates internalization and depletion of extracellular IL13. The sequence is that of Interleukin-13 (IL13) from Macaca thibetana (Pere David's macaque).